Here is a 379-residue protein sequence, read N- to C-terminus: Cytochrome b (379 aa).

4 helical membrane passes run 34-54 (FGSL…LLAM), 78-99 (WLIR…YLHI), 114-134 (WNTG…GYVL), and 179-199 (FFAL…IHLT). H84 and H98 together coordinate heme b. The heme b site is built by H183 and H197. Position 202 (H202) interacts with a ubiquinone. The next 4 membrane-spanning stretches (helical) occupy residues 227–247 (LKDI…AFFS), 289–309 (LGGV…PFLH), 321–341 (LSQV…WIGS), and 348–368 (FIII…ILFP).

Belongs to the cytochrome b family. As to quaternary structure, the cytochrome bc1 complex contains 11 subunits: 3 respiratory subunits (MT-CYB, CYC1 and UQCRFS1), 2 core proteins (UQCRC1 and UQCRC2) and 6 low-molecular weight proteins (UQCRH/QCR6, UQCRB/QCR7, UQCRQ/QCR8, UQCR10/QCR9, UQCR11/QCR10 and a cleavage product of UQCRFS1). This cytochrome bc1 complex then forms a dimer. Heme b is required as a cofactor.

The protein resides in the mitochondrion inner membrane. Its function is as follows. Component of the ubiquinol-cytochrome c reductase complex (complex III or cytochrome b-c1 complex) that is part of the mitochondrial respiratory chain. The b-c1 complex mediates electron transfer from ubiquinol to cytochrome c. Contributes to the generation of a proton gradient across the mitochondrial membrane that is then used for ATP synthesis. This Casuarius bennetti (Dwarf cassowary) protein is Cytochrome b (MT-CYB).